Consider the following 335-residue polypeptide: tRNA-dihydrouridine(20/20a) synthase (335 aa).

FMN-binding positions include 20-22 (PML) and glutamine 72. Residue cysteine 102 is the Proton donor of the active site. FMN is bound by residues lysine 141, histidine 173, 213–215 (NGG), and 235–236 (GR).

The protein belongs to the Dus family. DusA subfamily. Requires FMN as cofactor.

It carries out the reaction 5,6-dihydrouridine(20) in tRNA + NADP(+) = uridine(20) in tRNA + NADPH + H(+). It catalyses the reaction 5,6-dihydrouridine(20) in tRNA + NAD(+) = uridine(20) in tRNA + NADH + H(+). The catalysed reaction is 5,6-dihydrouridine(20a) in tRNA + NADP(+) = uridine(20a) in tRNA + NADPH + H(+). The enzyme catalyses 5,6-dihydrouridine(20a) in tRNA + NAD(+) = uridine(20a) in tRNA + NADH + H(+). In terms of biological role, catalyzes the synthesis of 5,6-dihydrouridine (D), a modified base found in the D-loop of most tRNAs, via the reduction of the C5-C6 double bond in target uridines. Specifically modifies U20 and U20a in tRNAs. The polypeptide is tRNA-dihydrouridine(20/20a) synthase (Shewanella oneidensis (strain ATCC 700550 / JCM 31522 / CIP 106686 / LMG 19005 / NCIMB 14063 / MR-1)).